We begin with the raw amino-acid sequence, 167 residues long: Crossover junction endodeoxyribonuclease RuvC (167 aa).

Catalysis depends on residues Asp14, Glu75, and Asp147. Residues Asp14, Glu75, and Asp147 each coordinate Mg(2+).

This sequence belongs to the RuvC family. Homodimer which binds Holliday junction (HJ) DNA. The HJ becomes 2-fold symmetrical on binding to RuvC with unstacked arms; it has a different conformation from HJ DNA in complex with RuvA. In the full resolvosome a probable DNA-RuvA(4)-RuvB(12)-RuvC(2) complex forms which resolves the HJ. Requires Mg(2+) as cofactor.

It localises to the cytoplasm. It carries out the reaction Endonucleolytic cleavage at a junction such as a reciprocal single-stranded crossover between two homologous DNA duplexes (Holliday junction).. Functionally, the RuvA-RuvB-RuvC complex processes Holliday junction (HJ) DNA during genetic recombination and DNA repair. Endonuclease that resolves HJ intermediates. Cleaves cruciform DNA by making single-stranded nicks across the HJ at symmetrical positions within the homologous arms, yielding a 5'-phosphate and a 3'-hydroxyl group; requires a central core of homology in the junction. The consensus cleavage sequence is 5'-(A/T)TT(C/G)-3'. Cleavage occurs on the 3'-side of the TT dinucleotide at the point of strand exchange. HJ branch migration catalyzed by RuvA-RuvB allows RuvC to scan DNA until it finds its consensus sequence, where it cleaves and resolves the cruciform DNA. This Synechocystis sp. (strain ATCC 27184 / PCC 6803 / Kazusa) protein is Crossover junction endodeoxyribonuclease RuvC.